The chain runs to 845 residues: Protein translocase subunit SecA 1 (845 aa).

Residues Gln-91, 109–113 (GEGKT), and Asp-498 contribute to the ATP site. The interval 795-845 (TDFGTAQHVSAEDGKEKAKKQPIVKGDKVGRNDPCPCGSGKKYKNCHGKEE) is disordered. Cys-829, Cys-831, Cys-840, and His-841 together coordinate Zn(2+). The span at 835-845 (KKYKNCHGKEE) shows a compositional bias: basic residues.

It belongs to the SecA family. As to quaternary structure, monomer and homodimer. Part of the essential Sec protein translocation apparatus which comprises SecA, SecYEG and auxiliary proteins SecDF. Other proteins may also be involved. It depends on Zn(2+) as a cofactor.

It localises to the cell membrane. The protein localises to the cytoplasm. The enzyme catalyses ATP + H2O + cellular proteinSide 1 = ADP + phosphate + cellular proteinSide 2.. Its function is as follows. Part of the Sec protein translocase complex. Interacts with the SecYEG preprotein conducting channel. Has a central role in coupling the hydrolysis of ATP to the transfer of proteins into and across the cell membrane, serving as an ATP-driven molecular motor driving the stepwise translocation of polypeptide chains across the membrane. This Staphylococcus haemolyticus (strain JCSC1435) protein is Protein translocase subunit SecA 1.